An 81-amino-acid chain; its full sequence is ATP synthase subunit c (81 aa).

2 helical membrane-spanning segments follow: residues 5–25 (VAAA…IGPG) and 57–77 (LAFM…LLFA).

The protein belongs to the ATPase C chain family. In terms of assembly, F-type ATPases have 2 components, F(1) - the catalytic core - and F(0) - the membrane proton channel. F(1) has five subunits: alpha(3), beta(3), gamma(1), delta(1), epsilon(1). F(0) has four main subunits: a(1), b(1), b'(1) and c(10-14). The alpha and beta chains form an alternating ring which encloses part of the gamma chain. F(1) is attached to F(0) by a central stalk formed by the gamma and epsilon chains, while a peripheral stalk is formed by the delta, b and b' chains.

Its subcellular location is the cellular thylakoid membrane. In terms of biological role, f(1)F(0) ATP synthase produces ATP from ADP in the presence of a proton or sodium gradient. F-type ATPases consist of two structural domains, F(1) containing the extramembraneous catalytic core and F(0) containing the membrane proton channel, linked together by a central stalk and a peripheral stalk. During catalysis, ATP synthesis in the catalytic domain of F(1) is coupled via a rotary mechanism of the central stalk subunits to proton translocation. Functionally, key component of the F(0) channel; it plays a direct role in translocation across the membrane. A homomeric c-ring of between 10-14 subunits forms the central stalk rotor element with the F(1) delta and epsilon subunits. This chain is ATP synthase subunit c, found in Microcystis aeruginosa (strain NIES-843 / IAM M-2473).